We begin with the raw amino-acid sequence, 1567 residues long: Myosin-2A (1567 aa).

One can recognise a Myosin N-terminal SH3-like domain in the interval 4–57; it reads EVGTRCWYPSKEQGWIGAEVTKNDLKDGTYFMELTLEDNEVVNVETKDLTNEKD. Residues 70–786 form the Myosin motor domain; it reads ESTEDLTTLS…MLAYFEKLRS (717 aa). Residue 164-171 coordinates ATP; sequence GESGAGKT. Residues 446–526 are actin-binding; it reads FIGVLDIYGF…LGILSLLDEE (81 aa). The disordered stretch occupies residues 619–640; it reads EEAKKNAASQDQKQLKKPTPIR. 6 consecutive IQ domains span residues 789-818, 812-836, 837-859, 860-884, 885-907, and 908-937; these read MNSA…SLSL, MKAS…EYEL, EQHA…YISG, VISS…QSKY, ESNA…AYES, and KRRD…DAKS. Positions 947-1091 form a coiled coil; it reads KLENKVIQLT…LAHLQTSIAL (145 aa). Positions 1092–1567 are non alpha-helical, tail domain; it reads GTVTTNTNIV…VAQQVTVPDA (476 aa). The region spanning 1230 to 1505 is the Dilute domain; it reads AQVLTTIQKV…LKYVADIVKK (276 aa).

The protein belongs to the TRAFAC class myosin-kinesin ATPase superfamily. Myosin family. Homodimer. Interacts with calmodulin (CMD1) and the myosin light chain MLC1 through its IQ repeats.

Functionally, myosin heavy chain that is required for the cell cycle-regulated transport of various organelles and proteins for their segregation. Functions by binding with its tail domain to receptor proteins on organelles and exerting force with its N-terminal motor domain against actin filaments, thereby transporting its cargo along polarized actin cables. The chain is Myosin-2A (MYO2A) from Naumovozyma castellii (Yeast).